Here is a 386-residue protein sequence, read N- to C-terminus: Ribonucleoside-diphosphate reductase subunit M2 (386 aa).

The segment covering 1–24 (MSSTRSPLKTKNENTISTKMNNMS) has biased composition (polar residues). The interval 1 to 36 (MSSTRSPLKTKNENTISTKMNNMSFVDKENTPPSLS) is disordered. Ser6 is modified (phosphoserine). Phosphothreonine is present on Thr31. 3 residues coordinate Fe cation: Asp135, Glu166, and His169. Tyr173 is an active-site residue. Residues Glu229, Glu263, and His266 each contribute to the Fe cation site.

This sequence belongs to the ribonucleoside diphosphate reductase small chain family. Heterodimer of a large and a small subunit. The cofactor is Fe cation.

The protein localises to the cytoplasm. It carries out the reaction a 2'-deoxyribonucleoside 5'-diphosphate + [thioredoxin]-disulfide + H2O = a ribonucleoside 5'-diphosphate + [thioredoxin]-dithiol. Its function is as follows. Provides the precursors necessary for DNA synthesis. Catalyzes the biosynthesis of deoxyribonucleotides from the corresponding ribonucleotides. In Danio rerio (Zebrafish), this protein is Ribonucleoside-diphosphate reductase subunit M2 (rrm2).